The primary structure comprises 523 residues: 2-isopropylmalate synthase (523 aa).

The 263-residue stretch at 5-267 (VIIFDTTLRD…HTNINHHEIW (263 aa)) folds into the Pyruvate carboxyltransferase domain. 4 residues coordinate Mn(2+): Asp-14, His-202, His-204, and Asn-238. The tract at residues 392–523 (RLDYFSVQSG…QNKENNKETV (132 aa)) is regulatory domain.

It belongs to the alpha-IPM synthase/homocitrate synthase family. LeuA type 1 subfamily. Homodimer. Mn(2+) serves as cofactor.

Its subcellular location is the cytoplasm. It catalyses the reaction 3-methyl-2-oxobutanoate + acetyl-CoA + H2O = (2S)-2-isopropylmalate + CoA + H(+). The protein operates within amino-acid biosynthesis; L-leucine biosynthesis; L-leucine from 3-methyl-2-oxobutanoate: step 1/4. Functionally, catalyzes the condensation of the acetyl group of acetyl-CoA with 3-methyl-2-oxobutanoate (2-ketoisovalerate) to form 3-carboxy-3-hydroxy-4-methylpentanoate (2-isopropylmalate). The protein is 2-isopropylmalate synthase of Klebsiella pneumoniae (strain 342).